The primary structure comprises 513 residues: t-SNARE domain-containing protein 1 (513 aa).

2 disordered regions span residues 1–23 and 49–128; these read MSYG…GPSR and ESKL…KPNF. Over residues 7–19 the composition is skewed to gly residues; sequence ARGGGLGSRGPFG. Phosphoserine is present on Ser-378. The t-SNARE coiled-coil homology domain maps to 416–478; that stretch reads LEAIRLREEA…EAARQLLAGA (63 aa). The helical transmembrane segment at 491–511 threads the bilayer; it reads CFLSAGVTALLVIIIIIATSV.

The protein resides in the membrane. This is t-SNARE domain-containing protein 1 (TSNARE1) from Homo sapiens (Human).